A 123-amino-acid polypeptide reads, in one-letter code: Small ribosomal subunit protein uS12cz/uS12cy (123 aa).

This sequence belongs to the universal ribosomal protein uS12 family. As to quaternary structure, part of the 30S ribosomal subunit.

The protein localises to the plastid. Its subcellular location is the chloroplast. Functionally, with S4 and S5 plays an important role in translational accuracy. Located at the interface of the 30S and 50S subunits. The polypeptide is Small ribosomal subunit protein uS12cz/uS12cy (rps12-A) (Gossypium barbadense (Sea Island cotton)).